The sequence spans 373 residues: MKFIDEARIEVIAGDGGDGSASMRREKFVPFGGPDGGDGGRGGSVIAVADRNINTLIDYRYAKKHLARNGENGRGADCYGKGGDDITLRMPVGTTITDMETGELIADLTEHNQSVQIAQGGAGGLGNLHFKSSTNRAPRQKTDGKPGERRMVRLELKVLADVGLLGMPNAGKSTFIASVSNAKPKIADYPFTTLAPNLGVVRVGPSRSFVIADIPGLIEGAAEGAGLGHQFLRHLQRTGLLLHIVDLAPFDDAVDPVAEAKAIVNELRKYDELLYEKPRWLVLNKLDMVPEDEREARVSAFLEGFGWDGPVFEISALTGQGCENLCYAVFDHISAHSDAQRAAEAEDLAADVRFREKPQAPAAADDAGTDPQV.

Positions 1–159 (MKFIDEARIE…RMVRLELKVL (159 aa)) constitute an Obg domain. Residues 128-147 (LHFKSSTNRAPRQKTDGKPG) are disordered. The region spanning 160–334 (ADVGLLGMPN…LCYAVFDHIS (175 aa)) is the OBG-type G domain. Residues 166–173 (GMPNAGKS), 191–195 (FTTLA), 213–216 (DIPG), 284–287 (NKLD), and 315–317 (SAL) each bind GTP. Serine 173 and threonine 193 together coordinate Mg(2+). A disordered region spans residues 354–373 (FREKPQAPAAADDAGTDPQV). A compositionally biased stretch (low complexity) spans 359–373 (QAPAAADDAGTDPQV).

The protein belongs to the TRAFAC class OBG-HflX-like GTPase superfamily. OBG GTPase family. Monomer. The cofactor is Mg(2+).

Its subcellular location is the cytoplasm. Functionally, an essential GTPase which binds GTP, GDP and possibly (p)ppGpp with moderate affinity, with high nucleotide exchange rates and a fairly low GTP hydrolysis rate. Plays a role in control of the cell cycle, stress response, ribosome biogenesis and in those bacteria that undergo differentiation, in morphogenesis control. This is GTPase Obg from Paraburkholderia phytofirmans (strain DSM 17436 / LMG 22146 / PsJN) (Burkholderia phytofirmans).